A 380-amino-acid polypeptide reads, in one-letter code: Succinate--CoA ligase [ADP-forming] subunit beta 2 (380 aa).

Positions 9 to 235 (KQIFSKHGIR…YTEADQMERI (227 aa)) constitute an ATP-grasp domain. ATP-binding positions include K45, 52–54 (GRG), E91, I94, and E99. Mg(2+)-binding residues include N191 and D204. Substrate-binding positions include N255 and 312–314 (GIT).

Belongs to the succinate/malate CoA ligase beta subunit family. Heterotetramer of two alpha and two beta subunits. Mg(2+) serves as cofactor.

It catalyses the reaction succinate + ATP + CoA = succinyl-CoA + ADP + phosphate. The catalysed reaction is GTP + succinate + CoA = succinyl-CoA + GDP + phosphate. It functions in the pathway carbohydrate metabolism; tricarboxylic acid cycle; succinate from succinyl-CoA (ligase route): step 1/1. Functionally, succinyl-CoA synthetase functions in the citric acid cycle (TCA), coupling the hydrolysis of succinyl-CoA to the synthesis of either ATP or GTP and thus represents the only step of substrate-level phosphorylation in the TCA. The beta subunit provides nucleotide specificity of the enzyme and binds the substrate succinate, while the binding sites for coenzyme A and phosphate are found in the alpha subunit. This chain is Succinate--CoA ligase [ADP-forming] subunit beta 2, found in Archaeoglobus fulgidus (strain ATCC 49558 / DSM 4304 / JCM 9628 / NBRC 100126 / VC-16).